The primary structure comprises 213 residues: High frequency lysogenization protein HflD homolog (213 aa).

The stretch at 79–122 (QGLNAELTRYTLSLMVLERKLSSAKGALNTLGDRINGLQRQLDH) forms a coiled coil.

Belongs to the HflD family.

The protein resides in the cytoplasm. The protein localises to the cell inner membrane. The chain is High frequency lysogenization protein HflD homolog from Salmonella typhi.